Consider the following 371-residue polypeptide: Queuine tRNA-ribosyltransferase (371 aa).

The Proton acceptor role is filled by D90. Residues D90–F94, D144, Q189, and G215 each bind substrate. The segment at G246 to N252 is RNA binding. D265 serves as the catalytic Nucleophile. The interval T270–R274 is RNA binding; important for wobble base 34 recognition. Zn(2+) contacts are provided by C303, C305, C308, and H334.

It belongs to the queuine tRNA-ribosyltransferase family. As to quaternary structure, homodimer. Within each dimer, one monomer is responsible for RNA recognition and catalysis, while the other monomer binds to the replacement base PreQ1. The cofactor is Zn(2+).

The enzyme catalyses 7-aminomethyl-7-carbaguanine + guanosine(34) in tRNA = 7-aminomethyl-7-carbaguanosine(34) in tRNA + guanine. The protein operates within tRNA modification; tRNA-queuosine biosynthesis. Functionally, catalyzes the base-exchange of a guanine (G) residue with the queuine precursor 7-aminomethyl-7-deazaguanine (PreQ1) at position 34 (anticodon wobble position) in tRNAs with GU(N) anticodons (tRNA-Asp, -Asn, -His and -Tyr). Catalysis occurs through a double-displacement mechanism. The nucleophile active site attacks the C1' of nucleotide 34 to detach the guanine base from the RNA, forming a covalent enzyme-RNA intermediate. The proton acceptor active site deprotonates the incoming PreQ1, allowing a nucleophilic attack on the C1' of the ribose to form the product. After dissociation, two additional enzymatic reactions on the tRNA convert PreQ1 to queuine (Q), resulting in the hypermodified nucleoside queuosine (7-(((4,5-cis-dihydroxy-2-cyclopenten-1-yl)amino)methyl)-7-deazaguanosine). The sequence is that of Queuine tRNA-ribosyltransferase from Helicobacter pylori (strain P12).